Reading from the N-terminus, the 893-residue chain is DNA mismatch repair protein MutS (893 aa).

Positions 1 to 17 are enriched in low complexity; the sequence is MESTMSSASTNASPPSA. A disordered region spans residues 1-22; it reads MESTMSSASTNASPPSASEKHT. Position 641–648 (641–648) interacts with ATP; that stretch reads GPNMGGKS.

It belongs to the DNA mismatch repair MutS family.

Its function is as follows. This protein is involved in the repair of mismatches in DNA. It is possible that it carries out the mismatch recognition step. This protein has a weak ATPase activity. This chain is DNA mismatch repair protein MutS, found in Herminiimonas arsenicoxydans.